Reading from the N-terminus, the 143-residue chain is Nucleoside diphosphate kinase (143 aa).

Positions 11, 59, 87, 93, 104, and 114 each coordinate ATP. Catalysis depends on H117, which acts as the Pros-phosphohistidine intermediate.

It belongs to the NDK family. In terms of assembly, homotetramer. It depends on Mg(2+) as a cofactor.

The protein resides in the cytoplasm. The catalysed reaction is a 2'-deoxyribonucleoside 5'-diphosphate + ATP = a 2'-deoxyribonucleoside 5'-triphosphate + ADP. The enzyme catalyses a ribonucleoside 5'-diphosphate + ATP = a ribonucleoside 5'-triphosphate + ADP. In terms of biological role, major role in the synthesis of nucleoside triphosphates other than ATP. The ATP gamma phosphate is transferred to the NDP beta phosphate via a ping-pong mechanism, using a phosphorylated active-site intermediate. The polypeptide is Nucleoside diphosphate kinase (Enterobacter sp. (strain 638)).